A 658-amino-acid polypeptide reads, in one-letter code: Threonine--tRNA ligase (658 aa).

The TGS domain occupies 1-64 (MSNTVSLQFP…GASGKVEIIT (64 aa)). A catalytic region spans residues 246-548 (DHRRLGREMD…LIENFAGHMP (303 aa)). 3 residues coordinate Zn(2+): Cys-343, His-394, and His-525.

This sequence belongs to the class-II aminoacyl-tRNA synthetase family. Homodimer. It depends on Zn(2+) as a cofactor.

The protein localises to the cytoplasm. It catalyses the reaction tRNA(Thr) + L-threonine + ATP = L-threonyl-tRNA(Thr) + AMP + diphosphate + H(+). Catalyzes the attachment of threonine to tRNA(Thr) in a two-step reaction: L-threonine is first activated by ATP to form Thr-AMP and then transferred to the acceptor end of tRNA(Thr). Also edits incorrectly charged L-seryl-tRNA(Thr). This is Threonine--tRNA ligase from Brucella melitensis biotype 2 (strain ATCC 23457).